We begin with the raw amino-acid sequence, 79 residues long: Defensin-like protein 272 (79 aa).

The N-terminal stretch at 1–24 is a signal peptide; it reads MSSKIKFVALLIVVISLLLNNAQS. 4 disulfides stabilise this stretch: Cys34/Cys77, Cys43/Cys63, Cys49/Cys75, and Cys53/Cys76.

It belongs to the DEFL family.

It localises to the secreted. This chain is Defensin-like protein 272, found in Arabidopsis thaliana (Mouse-ear cress).